We begin with the raw amino-acid sequence, 129 residues long: CD59B glycoprotein (129 aa).

Positions 1-23 (MRAQRGLILLLLLLAVFCSTAVS) are cleaved as a signal peptide. The UPAR/Ly6 domain maps to 24–107 (LKCYNCLDPV…GLEEPNNAET (84 aa)). Intrachain disulfides connect Cys26/Cys49, Cys29/Cys36, Cys42/Cys62, Cys68/Cys86, and Cys87/Cys92. N-linked (GlcNAc...) asparagine glycosylation occurs at Asn39. Asn104 carries GPI-anchor amidated asparagine lipidation. Positions 105–129 (AETSSLRKTALLGTSVLVAILKFCF) are cleaved as a propeptide — removed in mature form.

Interacts with T-cell surface antigen CD2. N- and O-glycosylated. Widely expressed in the kidneys, brain, lungs, spleen and testis Testis-specific.

The protein resides in the cell membrane. The protein localises to the secreted. Potent inhibitor of the complement membrane attack complex (MAC) action, which protects self-cells from damage during complement activation. Acts by binding to the beta-haipins of C8 (C8A and C8B) components of the assembling MAC, forming an intermolecular beta-sheet that prevents incorporation of the multiple copies of C9 required for complete formation of the osmolytic pore. This is CD59B glycoprotein from Mus musculus (Mouse).